Here is a 98-residue protein sequence, read N- to C-terminus: NADH-ubiquinone oxidoreductase chain 4L (98 aa).

A run of 3 helical transmembrane segments spans residues 1-21 (MSLI…GLLM), 26-46 (LMSA…FTTL), and 61-81 (IILL…LVMI).

Belongs to the complex I subunit 4L family. Core subunit of respiratory chain NADH dehydrogenase (Complex I) which is composed of 45 different subunits.

The protein localises to the mitochondrion inner membrane. It carries out the reaction a ubiquinone + NADH + 5 H(+)(in) = a ubiquinol + NAD(+) + 4 H(+)(out). Its function is as follows. Core subunit of the mitochondrial membrane respiratory chain NADH dehydrogenase (Complex I) which catalyzes electron transfer from NADH through the respiratory chain, using ubiquinone as an electron acceptor. Part of the enzyme membrane arm which is embedded in the lipid bilayer and involved in proton translocation. The protein is NADH-ubiquinone oxidoreductase chain 4L (MT-ND4L) of Physeter macrocephalus (Sperm whale).